A 495-amino-acid polypeptide reads, in one-letter code: Maturase K (495 aa).

It belongs to the intron maturase 2 family. MatK subfamily.

It is found in the plastid. The protein resides in the chloroplast. Usually encoded in the trnK tRNA gene intron. Probably assists in splicing its own and other chloroplast group II introns. The protein is Maturase K of Torreya californica (California nutmeg).